The following is a 70-amino-acid chain: Conotoxin Im23.3 (70 aa).

An N-terminal signal peptide occupies residues 1-22 (MIMRMTLTLFVLVVMTAASASG). The propeptide occupies 23–28 (DALTEA). 3 disulfide bridges follow: cysteine 34-cysteine 41, cysteine 45-cysteine 53, and cysteine 54-cysteine 69.

The protein belongs to the conotoxin K superfamily. Expressed by the venom duct.

The protein resides in the secreted. Its function is as follows. Neurotoxin that induces excitatory symptoms in mice following intracranial administration. No symptoms are observed after intraperitoneal and intravenous (tail vein) injections. The sequence is that of Conotoxin Im23.3 from Conus imperialis (Imperial cone).